The chain runs to 1007 residues: MGADARPLGVRAGGGGRGAARPGTSSRALPPPLPPLSFLLLLLAAPGARAAGYETCPMVHPDMLNVHLVAHTHDDVGWLKTVDQYFYGIHNDVQHAGVQYILDSVISSLLVEPTRRFIYVEIAFFSRWWHQQTNATQEVVRDLVRQGRLEFANGGWVMNDEAATHYGAIIDQMTLGLRFLEDTFGKDGRPRVAWHIDPFGHSREQASLFAQMGFDGLFFGRLDYQDKRVREENLGLEQVWRASASLKPPAADLFTSVLPNIYNPPEKLCWDTLCADKPFVEDRRSPEYNAEELVNYFLQLATAQGQHFRTNHTIMTMGSDFQYENANMWFRNLDRLIQLVNAQQQANGSRVNVLYSTPACYLWELNKANLTWSVKQDDFFPYADGPHQFWSGYFSSRPALKRYERLSYNFLQVCNQLEALAGPAANVGPYGSGDSAPLNQAMAVLQHHDAVSGTSKQHVADDYARQLAAGWDPCEVLLSNALARLSGSKEDFTYCRNLNVSVCPLSQTAKNFQVTIYNPLGRKIDWMVRLPVSKHGFVVRDPNGTVVPSDVVILPSSDGQELLFPASVPALGFSIYSVSQVPGQRPHAHKPQPRSQRPWSRVLAIQNEHIRARFDPDTGLLVEMENLDQNLLLPVRQAFYWYNASVGNNLSTQVSGAYIFRPNQEKPLMVSHWAQTRLVKTPLVQEVHQNFSAWCSQVVRLYRGQRHLELEWTVGPIPVGDGWGKEIISRFDTVLETKGLFYTDSNGREILERRRDYRPTWKLNQTETVAGNYYPVNSRIYIRDGNMQLTVLTDRSQGGSSLRDGSMELMVHRRLLKDDGRGVGEALLEDGLGRWVRGRHLVLLDKVRTAATGHRLQAEKEVLTPQVVLAPGGGAPYHLKVAPRKQFSGLRRELPPSVHLLTLARWDQKTLLLRLEHQFAVGEDSGNLSSPVTLDLTDLFSAFTITYLQETTLVANQLRASASRLKWTPNTGPTPLPSPSRLDPATITLQPMEIRTFLASVQWEEHG.

2 stretches are compositionally biased toward low complexity: residues methionine 1 to valine 10 and alanine 19 to alanine 28. The interval methionine 1–proline 30 is disordered. Positions methionine 1–alanine 50 are cleaved as a signal peptide. Cystine bridges form between cysteine 56–cysteine 360 and cysteine 269–cysteine 274. Positions 73 and 75 each coordinate Zn(2+). N-linked (GlcNAc...) asparagine glycosylation is present at asparagine 134. Aspartate 197 provides a ligand contact to Zn(2+). Residue aspartate 197 is the Nucleophile of the active site. N-linked (GlcNAc...) asparagine glycans are attached at residues asparagine 311, asparagine 347, and asparagine 369. Disulfide bonds link cysteine 414-cysteine 474 and cysteine 495-cysteine 503. Residue histidine 448 coordinates Zn(2+). N-linked (GlcNAc...) asparagine glycans are attached at residues asparagine 499, asparagine 543, asparagine 643, asparagine 649, asparagine 690, asparagine 764, and asparagine 927.

It belongs to the glycosyl hydrolase 38 family. Requires Zn(2+) as cofactor. Processed into 3 peptides of 72 kDa, 41 kDa and 12 kDa.

The protein resides in the lysosome. The catalysed reaction is Hydrolysis of terminal, non-reducing alpha-D-mannose residues in alpha-D-mannosides.. In terms of biological role, necessary for the catabolism of N-linked carbohydrates released during glycoprotein turnover. The polypeptide is Lysosomal alpha-mannosidase (MAN2B1) (Felis catus (Cat)).